The following is a 105-amino-acid chain: Small ribosomal subunit protein uS10 (105 aa).

Belongs to the universal ribosomal protein uS10 family. In terms of assembly, part of the 30S ribosomal subunit.

In terms of biological role, involved in the binding of tRNA to the ribosomes. The chain is Small ribosomal subunit protein uS10 from Gloeothece citriformis (strain PCC 7424) (Cyanothece sp. (strain PCC 7424)).